We begin with the raw amino-acid sequence, 472 residues long: Transmembrane protein 8B (472 aa).

The segment at 1–36 is disordered; that stretch reads MNMPQSLGNQPLPPEPPSLGTPAEGPGTTSPPEHCW. At 1-233 the chain is on the extracellular side; sequence MNMPQSLGNQ…ADALTYGFQL (233 aa). 2 N-linked (GlcNAc...) asparagine glycosylation sites follow: Asn-92 and Asn-100. The region spanning 182–221 is the EGF-like domain; the sequence is FLSPCVDDCGPYGQCKLLRTHNYLYAACECKAGWRGWGCT. 3 disulfides stabilise this stretch: Cys-186/Cys-196, Cys-190/Cys-209, and Cys-211/Cys-220. A helical membrane pass occupies residues 234–254; that stretch reads LSTLLLCLSNLMFLPPVVLAI. Residues 255–257 are Cytoplasmic-facing; that stretch reads RSR. A helical membrane pass occupies residues 258 to 277; that stretch reads YVLEAAVYTFTMFFSTFYHA. Residues 278–292 lie on the Extracellular side of the membrane; that stretch reads CDQPGIVVFCIMDYD. Residues 293-313 traverse the membrane as a helical segment; that stretch reads VLQFCDFLGSLMSVWVTVIAM. At 314-315 the chain is on the cytoplasmic side; sequence AR. A helical transmembrane segment spans residues 316–336; sequence LQPVVKQVLYLLGAMLLSMAL. The Extracellular segment spans residues 337–342; the sequence is QLDRHG. A helical transmembrane segment spans residues 343-363; that stretch reads LWNLLGPSLFALGILATAWTV. Topologically, residues 364–379 are cytoplasmic; the sequence is RSVRRRHCYPPTWRRW. A helical transmembrane segment spans residues 380–400; the sequence is LFYLCPGSLIAGSAVLLYAFV. Residues 401-405 lie on the Extracellular side of the membrane; that stretch reads ETRDN. Residues 406–426 traverse the membrane as a helical segment; it reads YFYIHSIWHMLIAGSVGFLLP. At 427–472 the chain is on the cytoplasmic side; sequence PRAKTDHGVPSGARARGCGYQLCINEQEELGLVGPGGATVSSICAS.

Belongs to the TMEM8 family. Isoform 2 (via its cytoplasmic part) interacts with EZR. Post-translationally, isoform 2 is N-glycosylated.

It is found in the cell membrane. The protein localises to the cytoplasm. It localises to the nucleus. The protein resides in the mitochondrion. Its subcellular location is the endoplasmic reticulum. Its function is as follows. May function as a regulator of the EGFR pathway. Probable tumor suppressor which may function in cell growth, proliferation and adhesion. This is Transmembrane protein 8B (TMEM8B) from Homo sapiens (Human).